The primary structure comprises 2070 residues: HEAT repeat-containing protein 5B (2070 aa).

3 HEAT repeats span residues 848–885 (EVRK…VVGE), 1062–1099 (VNLS…REAA), and 1290–1327 (LHLS…KFAS). A Phosphoserine modification is found at Ser-1737.

It belongs to the HEATR5 family. In terms of assembly, self-associates. Component of the aftiphilin/p200/gamma-synergin complex, at least composed of AFTPH/aftiphilin, HEATR5B/p200a and SYNRG/gamma-synergin, which plays a role in the AP1G1/AP-1-mediated protein trafficking from early to recycling endosomes and between the trans-Golgi network (TGN) and endosomes. Within the complex interacts with AFTPH/aftiphilin and SYNRG/gamma-synergin; the interactions are direct. Interacts with GGA1.

The protein localises to the cytoplasm. It localises to the perinuclear region. It is found in the cytoplasmic vesicle. The protein resides in the clathrin-coated vesicle. Component of clathrin-coated vesicles. Component of the aftiphilin/p200/gamma-synergin complex, which plays roles in AP1G1/AP-1-mediated protein trafficking including the trafficking of transferrin from early to recycling endosomes, and the membrane trafficking of furin and the lysosomal enzyme cathepsin D between the trans-Golgi network (TGN) and endosomes. This chain is HEAT repeat-containing protein 5B (Heatr5b), found in Mus musculus (Mouse).